A 246-amino-acid chain; its full sequence is Deoxycytidylate 5-hydroxymethyltransferase (246 aa).

The active site involves Cys-148.

It belongs to the thymidylate synthase family.

The catalysed reaction is dCMP + (6R)-5,10-methylene-5,6,7,8-tetrahydrofolate + H2O = 5-hydroxymethyl-dCMP + (6S)-5,6,7,8-tetrahydrofolate. The chain is Deoxycytidylate 5-hydroxymethyltransferase (42) from Escherichia coli (Bacteriophage T2).